Consider the following 84-residue polypeptide: Sulfur carrier protein TusA (84 aa).

The active-site Cysteine persulfide intermediate is the Cys-21.

This sequence belongs to the sulfur carrier protein TusA family.

It localises to the cytoplasm. In terms of biological role, sulfur carrier protein which probably makes part of a sulfur-relay system. This chain is Sulfur carrier protein TusA, found in Pseudomonas savastanoi pv. phaseolicola (strain 1448A / Race 6) (Pseudomonas syringae pv. phaseolicola (strain 1448A / Race 6)).